The primary structure comprises 147 residues: Hemoglobin subunit beta (147 aa).

The Globin domain occupies 3-147 (EWTDDERAII…VVSALGRQYH (145 aa)). Heme b is bound by residues H64 and H93.

Belongs to the globin family. As to quaternary structure, heterotetramer of two alpha chains and two beta chains. Red blood cells.

Involved in oxygen transport from gills to the various peripheral tissues. The polypeptide is Hemoglobin subunit beta (hbb) (Melanogrammus aeglefinus (Haddock)).